A 494-amino-acid chain; its full sequence is Transmembrane and coiled-coil domain-containing protein 6 (494 aa).

Positions 15 to 39 (GVEELRRRRREREAALRKARREQQL) form a coiled coil. The next 2 membrane-spanning stretches (helical) occupy residues 338 to 358 (LVAA…ALLP) and 386 to 406 (PLLQ…TVLC).

The protein localises to the membrane. The polypeptide is Transmembrane and coiled-coil domain-containing protein 6 (Tmco6) (Mus musculus (Mouse)).